The primary structure comprises 496 residues: Glycerol kinase (496 aa).

Thr-12 provides a ligand contact to ADP. ATP contacts are provided by Thr-12, Thr-13, and Ser-14. Thr-12 lines the sn-glycerol 3-phosphate pocket. Residue Arg-16 coordinates ADP. Sn-glycerol 3-phosphate contacts are provided by Arg-82, Glu-83, and Tyr-134. Residues Arg-82, Glu-83, and Tyr-134 each coordinate glycerol. Residue His-230 is modified to Phosphohistidine; by HPr. Asp-244 is a binding site for sn-glycerol 3-phosphate. Positions 244 and 245 each coordinate glycerol. Positions 266 and 309 each coordinate ADP. Residues Thr-266, Gly-309, Gln-313, and Gly-410 each coordinate ATP. Residues Gly-410 and Asn-414 each contribute to the ADP site.

The protein belongs to the FGGY kinase family. In terms of assembly, homotetramer and homodimer (in equilibrium). Post-translationally, the phosphoenolpyruvate-dependent sugar phosphotransferase system (PTS), including enzyme I, and histidine-containing protein (HPr) are required for the phosphorylation, which leads to the activation of the enzyme.

The enzyme catalyses glycerol + ATP = sn-glycerol 3-phosphate + ADP + H(+). The protein operates within polyol metabolism; glycerol degradation via glycerol kinase pathway; sn-glycerol 3-phosphate from glycerol: step 1/1. With respect to regulation, activated by phosphorylation and inhibited by fructose 1,6-bisphosphate (FBP). In terms of biological role, key enzyme in the regulation of glycerol uptake and metabolism. Catalyzes the phosphorylation of glycerol to yield sn-glycerol 3-phosphate. The chain is Glycerol kinase from Bacillus cereus (strain ATCC 14579 / DSM 31 / CCUG 7414 / JCM 2152 / NBRC 15305 / NCIMB 9373 / NCTC 2599 / NRRL B-3711).